Here is a 346-residue protein sequence, read N- to C-terminus: Structure-specific endonuclease subunit SLX1 (346 aa).

A GIY-YIG domain is found at 22–105; the sequence is DFYGVYLLRS…QHPYQTRHIK (84 aa). Residues 216–306 form an SLX1-type zinc finger; the sequence is CFICNETIDY…TPLQGKCLSC (91 aa).

Belongs to the SLX1 family. Forms a heterodimer with SLX4. Requires a divalent metal cation as cofactor.

The protein localises to the nucleus. Functionally, catalytic subunit of the SLX1-SLX4 structure-specific endonuclease that resolves DNA secondary structures generated during DNA repair and recombination. Has endonuclease activity towards branched DNA substrates, introducing single-strand cuts in duplex DNA close to junctions with ss-DNA. The polypeptide is Structure-specific endonuclease subunit SLX1 (Debaryomyces hansenii (strain ATCC 36239 / CBS 767 / BCRC 21394 / JCM 1990 / NBRC 0083 / IGC 2968) (Yeast)).